The chain runs to 276 residues: Diaminopimelate epimerase (276 aa).

The substrate site is built by Asn-13, Gln-46, and Asn-66. Cys-75 serves as the catalytic Proton donor. Residues 76 to 77 (GN), Asn-159, Asn-192, and 210 to 211 (ER) contribute to the substrate site. Cys-219 (proton acceptor) is an active-site residue. 220–221 (GT) is a binding site for substrate.

Belongs to the diaminopimelate epimerase family. In terms of assembly, homodimer.

It localises to the cytoplasm. It carries out the reaction (2S,6S)-2,6-diaminopimelate = meso-2,6-diaminopimelate. The protein operates within amino-acid biosynthesis; L-lysine biosynthesis via DAP pathway; DL-2,6-diaminopimelate from LL-2,6-diaminopimelate: step 1/1. Functionally, catalyzes the stereoinversion of LL-2,6-diaminopimelate (L,L-DAP) to meso-diaminopimelate (meso-DAP), a precursor of L-lysine and an essential component of the bacterial peptidoglycan. This Hahella chejuensis (strain KCTC 2396) protein is Diaminopimelate epimerase.